Reading from the N-terminus, the 337-residue chain is DNA-directed RNA polymerase subunit alpha (337 aa).

The segment at 1-233 (MVREKVKVST…NLFIPFLHVE (233 aa)) is alpha N-terminal domain (alpha-NTD). The alpha C-terminal domain (alpha-CTD) stretch occupies residues 267–337 (LAFQYIFIDQ…IEKAFQKKID (71 aa)).

The protein belongs to the RNA polymerase alpha chain family. As to quaternary structure, in plastids the minimal PEP RNA polymerase catalytic core is composed of four subunits: alpha, beta, beta', and beta''. When a (nuclear-encoded) sigma factor is associated with the core the holoenzyme is formed, which can initiate transcription.

Its subcellular location is the plastid. The protein localises to the chloroplast. It catalyses the reaction RNA(n) + a ribonucleoside 5'-triphosphate = RNA(n+1) + diphosphate. In terms of biological role, DNA-dependent RNA polymerase catalyzes the transcription of DNA into RNA using the four ribonucleoside triphosphates as substrates. The polypeptide is DNA-directed RNA polymerase subunit alpha (Arabis hirsuta (Hairy rock-cress)).